A 269-amino-acid polypeptide reads, in one-letter code: WW domain-binding protein 1 (269 aa).

2 short sequence motifs (PPxY motif) span residues proline 124 to tyrosine 127 and proline 137 to tyrosine 141. 2 disordered regions span residues glutamate 169–cysteine 203 and proline 249–proline 269. Residues glutamate 174–proline 183 are compositionally biased toward polar residues.

As to quaternary structure, interacts with NEDD4. Binds to the WW domain of YAP1, WWP1 and WWP2. Interacts with WWOX. Expressed in most tissues but at significantly lower levels in placenta, lung, liver, and kidney.

The sequence is that of WW domain-binding protein 1 (WBP1) from Homo sapiens (Human).